Reading from the N-terminus, the 188-residue chain is Tumor necrosis factor alpha-induced protein 8-like protein (188 aa).

It belongs to the TNFAIP8 family.

This is Tumor necrosis factor alpha-induced protein 8-like protein from Drosophila pseudoobscura pseudoobscura (Fruit fly).